A 297-amino-acid polypeptide reads, in one-letter code: Tumor necrosis factor receptor superfamily member 27 (297 aa).

Residues 1–138 (MDCQENEYRD…AHTVPPREAT (138 aa)) lie on the Extracellular side of the membrane. TNFR-Cys repeat units follow at residues 2–41 (DCQE…DAHC), 43–83 (VCPP…NAIC), and 85–118 (DCLP…EVQC). 8 disulfide bridges follow: Cys-3–Cys-15, Cys-18–Cys-31, Cys-21–Cys-41, Cys-44–Cys-58, Cys-61–Cys-75, Cys-64–Cys-83, Cys-86–Cys-104, and Cys-107–Cys-118. Asn-74 and Asn-77 each carry an N-linked (GlcNAc...) asparagine glycan. The chain crosses the membrane as a helical; Signal-anchor for type III membrane protein span at residues 139 to 159 (LVALVGSLLVVFALAFLGLFF). The Cytoplasmic portion of the chain corresponds to 160 to 297 (LYCKQIFNRH…LYVPFEVPSL (138 aa)).

Associates with TRAF1, TRAF3 and TRAF6.

It localises to the membrane. In terms of biological role, receptor for EDA isoform A2, but not for EDA isoform A1. Mediates the activation of the NF-kappa-B and JNK pathways. Activation seems to be mediated by binding to TRAF3 and TRAF6. The protein is Tumor necrosis factor receptor superfamily member 27 (Eda2r) of Mus musculus (Mouse).